The chain runs to 205 residues: Putative 3-methyladenine DNA glycosylase (205 aa).

Belongs to the DNA glycosylase MPG family.

This is Putative 3-methyladenine DNA glycosylase from Staphylococcus epidermidis (strain ATCC 35984 / DSM 28319 / BCRC 17069 / CCUG 31568 / BM 3577 / RP62A).